The chain runs to 145 residues: D-aminoacyl-tRNA deacylase (145 aa).

The short motif at Gly-137–Pro-138 is the Gly-cisPro motif, important for rejection of L-amino acids element.

This sequence belongs to the DTD family. Homodimer.

The protein localises to the cytoplasm. The enzyme catalyses glycyl-tRNA(Ala) + H2O = tRNA(Ala) + glycine + H(+). It catalyses the reaction a D-aminoacyl-tRNA + H2O = a tRNA + a D-alpha-amino acid + H(+). An aminoacyl-tRNA editing enzyme that deacylates mischarged D-aminoacyl-tRNAs. Also deacylates mischarged glycyl-tRNA(Ala), protecting cells against glycine mischarging by AlaRS. Acts via tRNA-based rather than protein-based catalysis; rejects L-amino acids rather than detecting D-amino acids in the active site. By recycling D-aminoacyl-tRNA to D-amino acids and free tRNA molecules, this enzyme counteracts the toxicity associated with the formation of D-aminoacyl-tRNA entities in vivo and helps enforce protein L-homochirality. This chain is D-aminoacyl-tRNA deacylase, found in Shewanella loihica (strain ATCC BAA-1088 / PV-4).